The sequence spans 375 residues: Glutamate 5-kinase (375 aa).

K17 contributes to the ATP binding site. The substrate site is built by S58, D145, and N157. ATP contacts are provided by residues 177–178 and 219–225; these read SD and TGGMVTK. Residues 281–359 form the PUA domain; that stretch reads QGALTLDDGA…RELARELGPA (79 aa).

This sequence belongs to the glutamate 5-kinase family.

The protein resides in the cytoplasm. The catalysed reaction is L-glutamate + ATP = L-glutamyl 5-phosphate + ADP. Its pathway is amino-acid biosynthesis; L-proline biosynthesis; L-glutamate 5-semialdehyde from L-glutamate: step 1/2. Catalyzes the transfer of a phosphate group to glutamate to form L-glutamate 5-phosphate. The polypeptide is Glutamate 5-kinase (Streptomyces avermitilis (strain ATCC 31267 / DSM 46492 / JCM 5070 / NBRC 14893 / NCIMB 12804 / NRRL 8165 / MA-4680)).